A 416-amino-acid polypeptide reads, in one-letter code: Elongation factor 1-gamma 3 (416 aa).

The GST N-terminal domain maps to 1–82; the sequence is MALVLHCGSG…YVARLKDNSS (82 aa). A GST C-terminal domain is found at 87–215; sequence SLIDYSHIEQ…FKQAESVPPV (129 aa). Positions 213–263 are disordered; it reads PPVQKKAAPPKESKAKEAKKEAPKEAPKPKVEASEEEEAPKPKPKNPLDLL. Residues 221-245 are compositionally biased toward basic and acidic residues; the sequence is PPKESKAKEAKKEAPKEAPKPKVEA. The EF-1-gamma C-terminal domain maps to 256–416; sequence PKNPLDLLPP…EDLLDAKCFK (161 aa).

EF-1 is composed of four subunits: alpha, beta, delta, and gamma.

In terms of biological role, probably plays a role in anchoring the complex to other cellular components. The polypeptide is Elongation factor 1-gamma 3 (Oryza sativa subsp. japonica (Rice)).